Here is a 175-residue protein sequence, read N- to C-terminus: Homeobox expressed in ES cells 1 (175 aa).

The interval 1–44 (MSPNLQEGARLVEGKPSSTSFSIESILGLDQKKDDAPSMKPHRP) is disordered. The segment at residues 108 to 167 (GRRPRTAFTQNQVEVLENVFRVNCYPGIDIREDLARKLNLEEDRIQIWFQNRRAKLKRSH) is a DNA-binding region (homeobox).

It belongs to the ANF homeobox family. Interacts with TLE1.

The protein localises to the nucleus. Its function is as follows. Required for the normal development of the forebrain, eyes and other anterior structures such as the olfactory placodes and pituitary gland. Possible transcriptional repressor. Binds to the palindromic PIII sequence, 5'-AGCTTGAGTCTAATTGAATTAACTGTAC-3'. The chain is Homeobox expressed in ES cells 1 (HESX1) from Oryctolagus cuniculus (Rabbit).